Consider the following 289-residue polypeptide: Protein shisa-2 homolog (289 aa).

Residues 1 to 27 (MWAGCHPDAASLLRLLLAALLAAGALA) form the signal peptide. Residues 28 to 104 (SGEYCHGWLD…RADKDGPDGS (77 aa)) are Extracellular-facing. Residues 81-102 (GCDNDRQQGAGEPGRADKDGPD) form a disordered region. The helical transmembrane segment at 105 to 125 (AVPIYVPFLIVGSVFVAFIVL) threads the bilayer. At 126-289 (GSLVAACCCR…EQKMYPAVTV (164 aa)) the chain is on the cytoplasmic side. The disordered stretch occupies residues 162 to 198 (PSASTSRGSSSRQSSTAASSSSSANSGARAPPTRSQT). Residues 163–191 (SASTSRGSSSRQSSTAASSSSSANSGARA) show a composition bias toward low complexity.

It belongs to the shisa family.

The protein localises to the endoplasmic reticulum membrane. Its function is as follows. Plays an essential role in the maturation of presomitic mesoderm cells by individual attenuation of both FGF and WNT signaling. The polypeptide is Protein shisa-2 homolog (SHISA2) (Bos taurus (Bovine)).